The chain runs to 283 residues: Orotidine 5'-phosphate decarboxylase (283 aa).

Substrate is bound by residues Asp40, Lys62–His64, Asp93–Thr102, Tyr220, and Arg239. The active-site Proton donor is Lys95.

This sequence belongs to the OMP decarboxylase family.

It carries out the reaction orotidine 5'-phosphate + H(+) = UMP + CO2. It functions in the pathway pyrimidine metabolism; UMP biosynthesis via de novo pathway; UMP from orotate: step 2/2. This Mycosarcoma maydis (Corn smut fungus) protein is Orotidine 5'-phosphate decarboxylase (PYR6).